A 98-amino-acid chain; its full sequence is NADH-ubiquinone oxidoreductase chain 4L (98 aa).

The next 3 helical transmembrane spans lie at 1–21, 29–49, and 61–81; these read MPVV…GLLV, SLLC…VTVL, and IILL…LVMV.

Belongs to the complex I subunit 4L family. As to quaternary structure, core subunit of respiratory chain NADH dehydrogenase (Complex I) which is composed of 45 different subunits.

It localises to the mitochondrion inner membrane. It catalyses the reaction a ubiquinone + NADH + 5 H(+)(in) = a ubiquinol + NAD(+) + 4 H(+)(out). In terms of biological role, core subunit of the mitochondrial membrane respiratory chain NADH dehydrogenase (Complex I) which catalyzes electron transfer from NADH through the respiratory chain, using ubiquinone as an electron acceptor. Part of the enzyme membrane arm which is embedded in the lipid bilayer and involved in proton translocation. The polypeptide is NADH-ubiquinone oxidoreductase chain 4L (MT-ND4L) (Ursus arctos (Brown bear)).